A 286-amino-acid chain; its full sequence is MSGSYSPQKDPQHPTQHQQFPPTPPYPSSSVWSGNLGENPVFIGIGSAAGASALTLLGVMGYRRYWKRIKNADYVTSELLRRRAWIKGIVTSVGDGDNLRLYHTPGPFFRYPFKIRSIPTTQKGLRNETISIRIAGVDAPENAHFGNPAQPHAKESLEWLRATILGKRMRCQLLAKDQYNRIVAVPYISRRLWWDRPLPLMMLKEGMAVVYKAGGAEYGPWGLDEMLKVEAEARDAKRGLWALRKFESPGDFKARMKLKSDVSEERPEKKSPSGWIALVKRLIRRT.

The disordered stretch occupies residues 1-29; the sequence is MSGSYSPQKDPQHPTQHQQFPPTPPYPSS. The chain crosses the membrane as a helical span at residues 41–61; that stretch reads VFIGIGSAAGASALTLLGVMG. The region spanning 84–243 is the TNase-like domain; the sequence is AWIKGIVTSV…RDAKRGLWAL (160 aa). Residue Arg133 is part of the active site. Asp138 lines the Ca(2+) pocket. Active-site residues include Glu141 and Arg181.

This sequence belongs to the LCL3 family.

The protein resides in the mitochondrion. It localises to the membrane. In Cryptococcus gattii serotype B (strain WM276 / ATCC MYA-4071) (Filobasidiella gattii), this protein is Probable endonuclease LCL3 (LCL3).